Consider the following 213-residue polypeptide: Protein SRN2 (213 aa).

Positions 128–213 (SKYVASWQDY…TWDKQGNLKY (86 aa)) constitute a VPS37 C-terminal domain.

This sequence belongs to the VPS37 family. As to quaternary structure, component of the ESCRT-I complex (endosomal sorting complex required for transport I) which consists of STP22, VPS28, SRN2 and MVB12 in a 1:1:1:1 stoichiometry. Interacts with STP22 and MVB12.

It is found in the cytoplasm. Its subcellular location is the endosome. It localises to the late endosome membrane. In terms of biological role, component of the ESCRT-I complex, a regulator of vesicular trafficking process. Required for normal endocytic and biosynthetic traffic to the yeast vacuole. This Saccharomyces cerevisiae (strain ATCC 204508 / S288c) (Baker's yeast) protein is Protein SRN2 (SRN2).